Here is a 95-residue protein sequence, read N- to C-terminus: Protein TusB (95 aa).

This sequence belongs to the DsrH/TusB family. In terms of assembly, heterohexamer, formed by a dimer of trimers. The hexameric TusBCD complex contains 2 copies each of TusB, TusC and TusD. The TusBCD complex interacts with TusE.

The protein localises to the cytoplasm. Functionally, part of a sulfur-relay system required for 2-thiolation of 5-methylaminomethyl-2-thiouridine (mnm(5)s(2)U) at tRNA wobble positions. The chain is Protein TusB from Erwinia tasmaniensis (strain DSM 17950 / CFBP 7177 / CIP 109463 / NCPPB 4357 / Et1/99).